The sequence spans 86 residues: Small ribosomal subunit protein bS20 (86 aa).

Residues 1-27 form a disordered region; the sequence is MANNKSAKKRAIQAEKRRQHNASRRSM.

It belongs to the bacterial ribosomal protein bS20 family.

Its function is as follows. Binds directly to 16S ribosomal RNA. The sequence is that of Small ribosomal subunit protein bS20 from Vibrio vulnificus (strain CMCP6).